The following is a 91-amino-acid chain: Insertion element IS1 2 protein InsA (91 aa).

It belongs to the IS1 elements InsA family.

Functionally, absolutely required for transposition of IS1. The polypeptide is Insertion element IS1 2 protein InsA (insA2) (Escherichia coli (strain K12)).